The following is a 501-amino-acid chain: Cytochrome P450 2J5 (501 aa).

C447 lines the heme pocket.

The protein belongs to the cytochrome P450 family. It depends on heme as a cofactor.

It localises to the endoplasmic reticulum membrane. It is found in the microsome membrane. The enzyme catalyses an organic molecule + reduced [NADPH--hemoprotein reductase] + O2 = an alcohol + oxidized [NADPH--hemoprotein reductase] + H2O + H(+). The protein is Cytochrome P450 2J5 (Cyp2j5) of Mus musculus (Mouse).